The primary structure comprises 391 residues: Formate-dependent phosphoribosylglycinamide formyltransferase (391 aa).

N(1)-(5-phospho-beta-D-ribosyl)glycinamide-binding positions include 18 to 19 (EL) and glutamate 78. ATP is bound by residues arginine 110, lysine 151, 156 to 161 (SSGKGQ), 191 to 194 (EEFI), and glutamate 199. An ATP-grasp domain is found at 115–305 (DLAAQQLGLR…EFELHLRAVL (191 aa)). Glutamate 264 and glutamate 276 together coordinate Mg(2+). Residues aspartate 283, lysine 353, and 360–361 (RR) contribute to the N(1)-(5-phospho-beta-D-ribosyl)glycinamide site.

This sequence belongs to the PurK/PurT family. In terms of assembly, homodimer.

The catalysed reaction is N(1)-(5-phospho-beta-D-ribosyl)glycinamide + formate + ATP = N(2)-formyl-N(1)-(5-phospho-beta-D-ribosyl)glycinamide + ADP + phosphate + H(+). The protein operates within purine metabolism; IMP biosynthesis via de novo pathway; N(2)-formyl-N(1)-(5-phospho-D-ribosyl)glycinamide from N(1)-(5-phospho-D-ribosyl)glycinamide (formate route): step 1/1. Functionally, involved in the de novo purine biosynthesis. Catalyzes the transfer of formate to 5-phospho-ribosyl-glycinamide (GAR), producing 5-phospho-ribosyl-N-formylglycinamide (FGAR). Formate is provided by PurU via hydrolysis of 10-formyl-tetrahydrofolate. This chain is Formate-dependent phosphoribosylglycinamide formyltransferase, found in Synechococcus elongatus (strain ATCC 33912 / PCC 7942 / FACHB-805) (Anacystis nidulans R2).